The primary structure comprises 187 residues: MANTPEPLTTEAAQVVSETDLGAAKLLEPSALWLEPYQWVSVAMLVLIAIMLWKKVPSLVTGGLDNKIAEIKAQLDEAKALRAEAEKLRDEYTAKIANAEKDAEAMMENARHEADAILEKAEADSKALVERRKKMAEDKISAAERDAVDEVRATAAAAAAAASRKLIAEKHDAEADRKLADEVIAEL.

The chain crosses the membrane as a helical span at residues 36–53 (PYQWVSVAMLVLIAIMLW).

Belongs to the ATPase B chain family. As to quaternary structure, F-type ATPases have 2 components, F(1) - the catalytic core - and F(0) - the membrane proton channel. F(1) has five subunits: alpha(3), beta(3), gamma(1), delta(1), epsilon(1). F(0) has four main subunits: a(1), b(2) and c(10-14). The alpha and beta chains form an alternating ring which encloses part of the gamma chain. F(1) is attached to F(0) by a central stalk formed by the gamma and epsilon chains, while a peripheral stalk is formed by the delta and b chains.

The protein resides in the cell inner membrane. F(1)F(0) ATP synthase produces ATP from ADP in the presence of a proton or sodium gradient. F-type ATPases consist of two structural domains, F(1) containing the extramembraneous catalytic core and F(0) containing the membrane proton channel, linked together by a central stalk and a peripheral stalk. During catalysis, ATP synthesis in the catalytic domain of F(1) is coupled via a rotary mechanism of the central stalk subunits to proton translocation. In terms of biological role, component of the F(0) channel, it forms part of the peripheral stalk, linking F(1) to F(0). The polypeptide is ATP synthase subunit b (Erythrobacter litoralis (strain HTCC2594)).